The following is a 505-amino-acid chain: Beta-agarase (505 aa).

A signal peptide spans 1 to 23 (MLKVIPWLLVTSSLVAIPTYIHA). The active-site Proton donor is Glu200. The Nucleophile role is filled by Glu322.

Belongs to the glycosyl hydrolase 86 family.

Its subcellular location is the secreted. It catalyses the reaction Hydrolysis of (1-&gt;4)-beta-D-galactosidic linkages in agarose, giving the tetramer as the predominant product.. Its function is as follows. Hydrolase that cleaves agar at the (1-&gt;4) linkage, producing tetrameric saccharide molecules. Is specific for agar and agarose and does not digest alginate or carrageenan. This Pseudoalteromonas atlantica (Alteromonas atlantica) protein is Beta-agarase.